Reading from the N-terminus, the 175-residue chain is UPF0398 protein SGO_0588 (175 aa).

This sequence belongs to the UPF0398 family.

In Streptococcus gordonii (strain Challis / ATCC 35105 / BCRC 15272 / CH1 / DL1 / V288), this protein is UPF0398 protein SGO_0588.